We begin with the raw amino-acid sequence, 119 residues long: Chorion class CA protein ERA.3 (119 aa).

A signal peptide spans 1–21; that stretch reads MSYFVVFAICIQACLFHNVYS. The left arm stretch occupies residues 22–55; that stretch reads QCLGRVGPGGPPLGPYGGPLGGPGYGPVGYGGCG. The segment at 56–103 is central domain; that stretch reads GYGGSGIGNVAVAGELPVVGSSAVMGQVPVIGAVEFAGPACAVGSVSI. A right arm region spans residues 104-119; it reads SGACGPTCGCGGLPYY.

Belongs to the chorion protein family.

This protein is one of many from the eggshell of the silk moth. The polypeptide is Chorion class CA protein ERA.3 (ERA.3) (Bombyx mori (Silk moth)).